Consider the following 527-residue polypeptide: ATP synthase subunit alpha (527 aa).

Residue Gly-172–Thr-179 participates in ATP binding.

This sequence belongs to the ATPase alpha/beta chains family. F-type ATPases have 2 components, CF(1) - the catalytic core - and CF(0) - the membrane proton channel. CF(1) has five subunits: alpha(3), beta(3), gamma(1), delta(1), epsilon(1). CF(0) has three main subunits: a(1), b(2) and c(9-12). The alpha and beta chains form an alternating ring which encloses part of the gamma chain. CF(1) is attached to CF(0) by a central stalk formed by the gamma and epsilon chains, while a peripheral stalk is formed by the delta and b chains.

The protein localises to the cell inner membrane. It catalyses the reaction ATP + H2O + 4 H(+)(in) = ADP + phosphate + 5 H(+)(out). In terms of biological role, produces ATP from ADP in the presence of a proton gradient across the membrane. The alpha chain is a regulatory subunit. This is ATP synthase subunit alpha from Bacteroides thetaiotaomicron (strain ATCC 29148 / DSM 2079 / JCM 5827 / CCUG 10774 / NCTC 10582 / VPI-5482 / E50).